The following is a 288-amino-acid chain: Prohibitin-2 (288 aa).

A helical; Signal-anchor for type II membrane protein transmembrane segment spans residues 21-43 (GKYAFTGTGLLLALGLAGFAVQT). The short motif at 125 to 128 (YRTL) is the AIM element.

Belongs to the prohibitin family. As to quaternary structure, the mitochondrial prohibitin complex consists of two subunits (phb1 and phb2). The subunits assemble into a membrane-associated ring-shaped supercomplex of approximately 1 mDa.

The protein localises to the mitochondrion inner membrane. In terms of biological role, prohibitin probably acts as a holdase/unfoldase for the stabilization of newly synthesized mitochondrial proteins. Involved in mitophagy; may act as an adapter for atg8 that supports mitophagosome assembly. Negatively regulates the proteolytic processing of atg32 via the i-AAA protease. Acts as a negative regulator of the m-AAA protease. This is Prohibitin-2 (phb2) from Schizosaccharomyces pombe (strain 972 / ATCC 24843) (Fission yeast).